The chain runs to 154 residues: UPF0756 membrane protein RBAM_026200 (154 aa).

4 helical membrane-spanning segments follow: residues 14-34, 54-74, 87-107, and 117-137; these read AIAL…LIVI, WGVT…DIGF, WIAL…LTLL, and LVIG…GPLI.

It belongs to the UPF0756 family.

The protein resides in the cell membrane. This Bacillus velezensis (strain DSM 23117 / BGSC 10A6 / LMG 26770 / FZB42) (Bacillus amyloliquefaciens subsp. plantarum) protein is UPF0756 membrane protein RBAM_026200.